A 930-amino-acid chain; its full sequence is MVARNLYELLEHAALDPQDNKISVYNPGNVDQVGKSLTYADLLNTAKTNALLLPQVKGIRPDSVILLHFDNHFDAIVWFWSVIAAGYVPAISTPFTNDPEGRKKHLIHLKTLLKDPVIITQESLAKAFSIVDGLNTHTIESIQKFDAPHILNGVHATAKQHDDLAVLMLTSGSSGNAKAVCLRHGQLLQSIAGKSTHHGISKSDVFLNWIGLDHVANLTETHLQAMQHAAPQFHVQASDLLVDPLILLKLIDRHRITVTFAPNFFIASVRVALEHPEPFLHGKEPDLTCFRIMISGGEANVVEASQALTTLFQKYGVSSEFIRPGFGMTETCAGSIYSRECPSYDVSNKWEFASLGTCIPGLQMRISSDSGEILSMNQVGNLELFGPILFHEYYNNPVATAEAFTADHWFRTGDHASIDGNGRLSLAGRAKETIIVNGVKYFPHELETAIEDALIPGLTPSYTVVFPHRPKNSQTEAVCVVYLPSYEPEDVLARVGVADAISKISIMQTGVKPFQIIPLDKTLLPKSSLGKLSRAKTRAAFEAGKYEVFQKLNDDAIHAYRATQNQAPSNETEATILHVFADLFEIPEADIGVNTSLFEMGVSSIEIIKFKQRIQTELKLKVEIPVITMLTNPTIRGLAGTLETLMGPQVYSPKVTLQAEGKKTPLWLVHPGVGEVLVFLNLAKFIVDRPIHALRARGFDGEPFFEDIAEVVSTYHQAIKEEQPEGPYAIAGYSYGSMLAFEVSKVLEANGDKVEFLGVFNLPPHIKFRMRQLDWVEVLLNLSYFLDLMTEEEAHRISPEMHELSNSLGNDKVLDYILERAPRERMHEMALDRKKMSTWADLAYRMQAIAQDYDPSGRVRNMDIFYAIPLVAVAKSKKEWVDNHLVKWRGFVDEEPHWHEVDGAHYTMLGPDNIHTFQKTLRASLEERGL.

An adenylation (A) domain region spans residues 15-436; it reads LDPQDNKISV…AGRAKETIIV (422 aa). Residues 567-646 enclose the Carrier domain; sequence APSNETEATI…GLAGTLETLM (80 aa). Position 604 is an O-(pantetheine 4'-phosphoryl)serine (Ser604). The segment at 665-914 is thioesterase (TE) domain; that stretch reads PLWLVHPGVG…HYTMLGPDNI (250 aa).

It belongs to the NRP synthetase family.

The enzyme catalyses 2 3-phenylpyruvate + 2 ATP = polyporic acid + 2 AMP + 2 diphosphate + H(+). The protein operates within secondary metabolite biosynthesis. Hydroxyphenylpyruvate acts more like a competitive inhibitor rather than a substrate. Functionally, nonribosomal peptide synthetase that mediates the biosynthesis of polyporic acid via the condensation of 2 phenylpyruvate units. Polyporic acid is further hydroxylaed by the cytochrome P450 monooxygenase MO6277 into less toxic ascocorynin. This is Nonribosomal peptide synthetase acyN from Ascocoryne sarcoides (Purple jellydisc fungus).